The following is a 130-amino-acid chain: uncharacterized protein (130 aa).

2 helical membrane passes run 35–57 (FLIT…FISL) and 72–91 (IVFF…LLLL).

The protein localises to the cell membrane. This is an uncharacterized protein from Pasteurella multocida (strain Pm70).